Reading from the N-terminus, the 598-residue chain is Elongation factor 4 (598 aa).

A tr-type G domain is found at 2–183 (KHIRNFCIIA…AIIEKIPHPK (182 aa)). GTP is bound by residues 14 to 19 (DHGKST) and 130 to 133 (NKVD).

Belongs to the TRAFAC class translation factor GTPase superfamily. Classic translation factor GTPase family. LepA subfamily.

It localises to the cell inner membrane. It carries out the reaction GTP + H2O = GDP + phosphate + H(+). Its function is as follows. Required for accurate and efficient protein synthesis under certain stress conditions. May act as a fidelity factor of the translation reaction, by catalyzing a one-codon backward translocation of tRNAs on improperly translocated ribosomes. Back-translocation proceeds from a post-translocation (POST) complex to a pre-translocation (PRE) complex, thus giving elongation factor G a second chance to translocate the tRNAs correctly. Binds to ribosomes in a GTP-dependent manner. This chain is Elongation factor 4, found in Flavobacterium psychrophilum (strain ATCC 49511 / DSM 21280 / CIP 103535 / JIP02/86).